Here is a 273-residue protein sequence, read N- to C-terminus: 4-hydroxy-tetrahydrodipicolinate reductase (273 aa).

Residues 12–17 (GAGGRM) and Glu38 contribute to the NAD(+) site. Arg39 provides a ligand contact to NADP(+). Residues 102-104 (GTT) and 126-129 (AANF) contribute to the NAD(+) site. The active-site Proton donor/acceptor is the His159. His160 is a binding site for (S)-2,3,4,5-tetrahydrodipicolinate. Residue Lys163 is the Proton donor of the active site. A (S)-2,3,4,5-tetrahydrodipicolinate-binding site is contributed by 169 to 170 (GT).

The protein belongs to the DapB family. As to quaternary structure, homotetramer.

The protein localises to the cytoplasm. It carries out the reaction (S)-2,3,4,5-tetrahydrodipicolinate + NAD(+) + H2O = (2S,4S)-4-hydroxy-2,3,4,5-tetrahydrodipicolinate + NADH + H(+). It catalyses the reaction (S)-2,3,4,5-tetrahydrodipicolinate + NADP(+) + H2O = (2S,4S)-4-hydroxy-2,3,4,5-tetrahydrodipicolinate + NADPH + H(+). The protein operates within amino-acid biosynthesis; L-lysine biosynthesis via DAP pathway; (S)-tetrahydrodipicolinate from L-aspartate: step 4/4. In terms of biological role, catalyzes the conversion of 4-hydroxy-tetrahydrodipicolinate (HTPA) to tetrahydrodipicolinate. The sequence is that of 4-hydroxy-tetrahydrodipicolinate reductase from Enterobacter sp. (strain 638).